The sequence spans 363 residues: MKQLMLYCRQGFEKECAGEIQDKATQLEVYGFPRVFKNAGYVLFECYQDGDADKLARELDFNALIFARQMFAVAAEFTELPSEDRISPILAELGEIDAFPVCGDLRIETPDTNEAKELLKFCRKFTVPMRQALRGKGLLLAKENAKKPVFHLCFVASGHCFAGYSYSHNNSRFFMGIPRLKFPADAPSRSTLKLEEAFHVFIPREEWDTRLSSGMWAVDLGACPGGWTYQLVQRSMFVHCVDNGMMADSLMETGQIKHHMVDGFKFEPDRKNVTWLVCDMVEKPARVAHLMGEWLIKGWAKETIFNLKLPMKGRYDEVLQDIENLKTFLIENKVKFKLQAKHLYHDREEITVHIQVLSNISPH.

Residues S190, 223 to 226 (CPGG), D242, D262, and D279 each bind S-adenosyl-L-methionine. Residue K308 is the Proton acceptor of the active site.

This sequence belongs to the class I-like SAM-binding methyltransferase superfamily. RNA methyltransferase RlmE family. RlmM subfamily. As to quaternary structure, monomer.

Its subcellular location is the cytoplasm. It catalyses the reaction cytidine(2498) in 23S rRNA + S-adenosyl-L-methionine = 2'-O-methylcytidine(2498) in 23S rRNA + S-adenosyl-L-homocysteine + H(+). Catalyzes the 2'-O-methylation at nucleotide C2498 in 23S rRNA. The protein is Ribosomal RNA large subunit methyltransferase M of Vibrio vulnificus (strain CMCP6).